A 339-amino-acid chain; its full sequence is Protein FAM76B (339 aa).

Ala-2 bears the N-acetylalanine mark. A phosphoserine mark is found at Ser-22 and Ser-148. Positions Glu-144–Thr-243 are disordered. The segment covering Ser-148 to Ser-160 has biased composition (low complexity). Over residues His-167 to Ile-189 the composition is skewed to basic residues. Position 193 is a phosphoserine (Ser-193). At Thr-215 the chain carries Phosphothreonine. Positions Thr-215–Ser-224 are enriched in basic and acidic residues. Residues Asn-228 to Thr-243 show a composition bias toward polar residues. Positions Leu-248 to Lys-328 form a coiled coil.

It belongs to the FAM76 family. In terms of assembly, interacts with HNRNPA2B1 (via C-terminus); the interaction results in retention of HNRNPA2B1 in the nucleus and inhibition of the NF-kappa-B-mediated inflammatory pathway.

The protein resides in the nucleus speckle. In terms of biological role, negatively regulates the NF-kappa-B-mediated inflammatory pathway by preventing the translocation of HNRNPA2B1 from the nucleus to the cytoplasm. Inhibits the PI3K/Akt/NF-kappa-B pathway-mediated polarization of M1 macrophages by binding to and stabilizing PIK3CD mRNA, resulting in increased levels of PIK3CD protein and increased levels of phosphorylated downstream target AKT which leads to decreased NF-kappa-B signaling. The protein is Protein FAM76B (FAM76B) of Homo sapiens (Human).